The sequence spans 55 residues: Large ribosomal subunit protein bL33C (55 aa).

The protein belongs to the bacterial ribosomal protein bL33 family.

This is Large ribosomal subunit protein bL33C from Kineococcus radiotolerans (strain ATCC BAA-149 / DSM 14245 / SRS30216).